A 404-amino-acid chain; its full sequence is Cysteine desulfurase IscS (404 aa).

Residues 75–76 (AT), N155, Q183, and 203–205 (SAH) contribute to the pyridoxal 5'-phosphate site. K206 carries the N6-(pyridoxal phosphate)lysine modification. T243 provides a ligand contact to pyridoxal 5'-phosphate. C328 acts as the Cysteine persulfide intermediate in catalysis. C328 is a binding site for [2Fe-2S] cluster.

The protein belongs to the class-V pyridoxal-phosphate-dependent aminotransferase family. NifS/IscS subfamily. In terms of assembly, homodimer. Forms a heterotetramer with IscU, interacts with other sulfur acceptors. Requires pyridoxal 5'-phosphate as cofactor.

Its subcellular location is the cytoplasm. It catalyses the reaction (sulfur carrier)-H + L-cysteine = (sulfur carrier)-SH + L-alanine. Its pathway is cofactor biosynthesis; iron-sulfur cluster biosynthesis. Its function is as follows. Master enzyme that delivers sulfur to a number of partners involved in Fe-S cluster assembly, tRNA modification or cofactor biosynthesis. Catalyzes the removal of elemental sulfur atoms from cysteine to produce alanine. Functions as a sulfur delivery protein for Fe-S cluster synthesis onto IscU, an Fe-S scaffold assembly protein, as well as other S acceptor proteins. The chain is Cysteine desulfurase IscS from Neisseria gonorrhoeae (strain ATCC 700825 / FA 1090).